Here is a 156-residue protein sequence, read N- to C-terminus: uncharacterized protein (156 aa).

This is an uncharacterized protein from Bacillus subtilis (strain 168).